The primary structure comprises 219 residues: Dehydration-responsive element-binding protein 1F (219 aa).

A disordered region spans residues 1-45 (MDTEDTSSASSSSVSPPSSPGGGHHHRLPPKRRAGRKKFRETRHP). Low complexity predominate over residues 7–16 (SSASSSSVSP). Residues 23-41 (GHHHRLPPKRRAGRKKFRE) show a composition bias toward basic residues. Positions 46–105 (VYRGVRARAGGSRWVCEVREPQAQARIWLGTYPTPEMAARAHDVAAIALRGERGAELNFP) form a DNA-binding region, AP2/ERF. A disordered region spans residues 134-161 (RRPPPPLALPEDPQEGTSGGGATATSGR).

This sequence belongs to the AP2/ERF transcription factor family. ERF subfamily. Mostly expressed in developing seeds and apices.

It is found in the nucleus. Transcriptional activator that binds specifically to the DNA sequence 5'-[AG]CCGAC-3'. Binding to the C-repeat/DRE element mediates high salinity- and dehydration-inducible transcription. This chain is Dehydration-responsive element-binding protein 1F (DREB1F), found in Oryza sativa subsp. indica (Rice).